The sequence spans 290 residues: MTSTKEIKNKIVSVTNTKKITKAMEMVAVSKMRKTEERMRSGRPYSDIIRKVIDHVTQGNLEYKHSYLEERKTNRIGMIIISTDRGLCGGLNTNLFKQVLFKIQNFAKVNIPCDLILFGLKSLSVFKLCGSNILAKATNLGENPKLEELINSVGIILQEYQYKRIDKIFIAYNKFHNKMSQYPTITQLLPFSKKNDQDASNNNWDYLYEPESKLILDTLFNRYIESQVYQSILENIASEHAARMIAMKTATDNSGNRIKELQLVYNKVRQANITQELNEIVSGASAVSID.

Belongs to the ATPase gamma chain family. As to quaternary structure, F-type ATPases have 2 components, CF(1) - the catalytic core - and CF(0) - the membrane proton channel. CF(1) has five subunits: alpha(3), beta(3), gamma(1), delta(1), epsilon(1). CF(0) has three main subunits: a, b and c.

Its subcellular location is the cell membrane. Produces ATP from ADP in the presence of a proton gradient across the membrane. The gamma chain is believed to be important in regulating ATPase activity and the flow of protons through the CF(0) complex. This is ATP synthase gamma chain from Buchnera aphidicola subsp. Acyrthosiphon pisum (strain 5A).